We begin with the raw amino-acid sequence, 524 residues long: Serine/threonine-protein kinase PAK 2 (524 aa).

Positions 1 to 81 are disordered; it reads MSDNGELEDK…PEISPPSDFE (81 aa). An N-acetylserine modification is found at Ser2. 4 positions are modified to phosphoserine: Ser2, Ser20, Ser55, and Ser58. Thr60 is modified (phosphothreonine). The residue at position 62 (Lys62) is an N6-acetyllysine. Position 64 is a phosphoserine (Ser64). Basic and acidic residues predominate over residues 67–81; it reads KEKERPEISPPSDFE. Residues 69-112 are GTPase-binding; it reads KERPEISPPSDFEHTIHVGFDAVTGEFTGMPEQWARLLQTSNIT. The tract at residues 69–137 is autoregulatory region; that stretch reads KERPEISPPS…KFYDSNTVKQ (69 aa). A CRIB domain is found at 74-87; the sequence is ISPPSDFEHTIHVG. Residues 88-248 form a linker region; that stretch reads FDAVTGEFTG…IVSIGDPKKK (161 aa). Lys128 is modified (N6-acetyllysine). Phosphothreonine is present on Thr134. The residue at position 139 (Tyr139) is a Phosphotyrosine. Position 141 is a phosphoserine (Ser141). The residue at position 143 (Thr143) is a Phosphothreonine. Ser152 carries the post-translational modification Phosphoserine. Thr159 and Thr169 each carry phosphothreonine. A compositionally biased stretch (acidic residues) spans 169-178; the sequence is TEEDDDDEEA. A disordered region spans residues 169 to 188; it reads TEEDDDDEEAAPPVIAPRPD. A Phosphoserine modification is found at Ser197. The interval 204–228 is disordered; the sequence is APVGDSHVDSGAKSSDKQKKKTKMT. Residues 209–228 show a composition bias toward basic and acidic residues; sequence SHVDSGAKSSDKQKKKTKMT. The short motif at 245–251 is the Nuclear localization signal element; it reads PKKKYTR. A Protein kinase domain is found at 249–500; that stretch reads YTRYEKIGQG…AKELLQHPFL (252 aa). ATP is bound by residues 255-263 and Lys278; that span reads IGQGASGTV. Asp368 serves as the catalytic Proton acceptor. A Phosphothreonine; by autocatalysis modification is found at Thr402.

Interacts tightly with GTP-bound but not GDP-bound CDC42/p21 and RAC1. Interacts with SH3MD4. Interacts with SCRIB. Interacts with ARHGEF7 and GIT1. PAK-2p34 interacts with ARHGAP10. Interacts with RAC1. Post-translationally, full-length PAK2 is autophosphorylated when activated by CDC42/p21. Following cleavage, both peptides, PAK-2p27 and PAK-2p34, become highly autophosphorylated. Autophosphorylation of PAK-2p27 can occur in the absence of any effectors and is dependent on phosphorylation of Thr-402, because PAK-2p27 is acting as an exogenous substrate. In terms of processing, during apoptosis proteolytically cleaved by caspase-3 or caspase-3-like proteases to yield active PAK-2p34. Ubiquitinated, leading to its proteasomal degradation.

It is found in the cytoplasm. Its subcellular location is the nucleus. It localises to the perinuclear region. The protein localises to the membrane. It carries out the reaction L-seryl-[protein] + ATP = O-phospho-L-seryl-[protein] + ADP + H(+). It catalyses the reaction L-threonyl-[protein] + ATP = O-phospho-L-threonyl-[protein] + ADP + H(+). Its activity is regulated as follows. Activated by binding small G proteins. Binding of GTP-bound CDC42 or RAC1 to the autoregulatory region releases monomers from the autoinhibited dimer, enables phosphorylation of Thr-402 and allows the kinase domain to adopt an active structure. Following caspase cleavage, autophosphorylated PAK-2p34 is constitutively active. Its function is as follows. Serine/threonine protein kinase that plays a role in a variety of different signaling pathways including cytoskeleton regulation, cell motility, cell cycle progression, apoptosis or proliferation. Acts as a downstream effector of the small GTPases CDC42 and RAC1. Activation by the binding of active CDC42 and RAC1 results in a conformational change and a subsequent autophosphorylation on several serine and/or threonine residues. Full-length PAK2 stimulates cell survival and cell growth. Phosphorylates MAPK4 and MAPK6 and activates the downstream target MAPKAPK5, a regulator of F-actin polymerization and cell migration. Phosphorylates JUN and plays an important role in EGF-induced cell proliferation. Phosphorylates many other substrates including histone H4 to promote assembly of H3.3 and H4 into nucleosomes, BAD, ribosomal protein S6, or MBP. Phosphorylates CASP7, thereby preventing its activity. Additionally, associates with ARHGEF7 and GIT1 to perform kinase-independent functions such as spindle orientation control during mitosis. On the other hand, apoptotic stimuli such as DNA damage lead to caspase-mediated cleavage of PAK2, generating PAK-2p34, an active p34 fragment that translocates to the nucleus and promotes cellular apoptosis involving the JNK signaling pathway. Caspase-activated PAK2 phosphorylates MKNK1 and reduces cellular translation. This is Serine/threonine-protein kinase PAK 2 (PAK2) from Oryctolagus cuniculus (Rabbit).